The primary structure comprises 126 residues: Large ribosomal subunit protein bL12 (126 aa).

It belongs to the bacterial ribosomal protein bL12 family. In terms of assembly, homodimer. Part of the ribosomal stalk of the 50S ribosomal subunit. Forms a multimeric L10(L12)X complex, where L10 forms an elongated spine to which 2 to 4 L12 dimers bind in a sequential fashion. Binds GTP-bound translation factors.

Forms part of the ribosomal stalk which helps the ribosome interact with GTP-bound translation factors. Is thus essential for accurate translation. In Chlorobium phaeobacteroides (strain BS1), this protein is Large ribosomal subunit protein bL12.